The sequence spans 193 residues: Oligoribonuclease (193 aa).

Residues 8-171 (LVWLDLEMTG…EDIRESVAEL (164 aa)) enclose the Exonuclease domain. Residue tyrosine 129 is part of the active site.

It belongs to the oligoribonuclease family.

Its subcellular location is the cytoplasm. Its function is as follows. 3'-to-5' exoribonuclease specific for small oligoribonucleotides. The sequence is that of Oligoribonuclease from Alkalilimnicola ehrlichii (strain ATCC BAA-1101 / DSM 17681 / MLHE-1).